We begin with the raw amino-acid sequence, 487 residues long: N-succinylglutamate 5-semialdehyde dehydrogenase (487 aa).

Residue glycine 221–glycine 226 coordinates NAD(+). Residues glutamate 244 and cysteine 278 contribute to the active site.

The protein belongs to the aldehyde dehydrogenase family. AstD subfamily.

The enzyme catalyses N-succinyl-L-glutamate 5-semialdehyde + NAD(+) + H2O = N-succinyl-L-glutamate + NADH + 2 H(+). It functions in the pathway amino-acid degradation; L-arginine degradation via AST pathway; L-glutamate and succinate from L-arginine: step 4/5. Functionally, catalyzes the NAD-dependent reduction of succinylglutamate semialdehyde into succinylglutamate. The protein is N-succinylglutamate 5-semialdehyde dehydrogenase of Pseudomonas putida (strain ATCC 700007 / DSM 6899 / JCM 31910 / BCRC 17059 / LMG 24140 / F1).